The primary structure comprises 522 residues: Glutamate--cysteine ligase (522 aa).

It belongs to the glutamate--cysteine ligase type 1 family. Type 1 subfamily.

It carries out the reaction L-cysteine + L-glutamate + ATP = gamma-L-glutamyl-L-cysteine + ADP + phosphate + H(+). Its pathway is sulfur metabolism; glutathione biosynthesis; glutathione from L-cysteine and L-glutamate: step 1/2. The protein is Glutamate--cysteine ligase of Vibrio campbellii (strain ATCC BAA-1116).